The following is a 369-amino-acid chain: Chorismate synthase (369 aa).

NADP(+)-binding residues include arginine 48 and arginine 54. Residues 125-127 (RSS), 238-239 (NA), glycine 278, 293-297 (KPTSS), and arginine 319 each bind FMN.

It belongs to the chorismate synthase family. Homotetramer. The cofactor is FMNH2.

The catalysed reaction is 5-O-(1-carboxyvinyl)-3-phosphoshikimate = chorismate + phosphate. Its pathway is metabolic intermediate biosynthesis; chorismate biosynthesis; chorismate from D-erythrose 4-phosphate and phosphoenolpyruvate: step 7/7. Functionally, catalyzes the anti-1,4-elimination of the C-3 phosphate and the C-6 proR hydrogen from 5-enolpyruvylshikimate-3-phosphate (EPSP) to yield chorismate, which is the branch point compound that serves as the starting substrate for the three terminal pathways of aromatic amino acid biosynthesis. This reaction introduces a second double bond into the aromatic ring system. In Burkholderia mallei (strain ATCC 23344), this protein is Chorismate synthase.